Here is a 1489-residue protein sequence, read N- to C-terminus: Calmodulin-regulated spectrin-associated protein 2 (1489 aa).

One can recognise a Calponin-homology (CH) domain in the interval 222–335 (WKLVPARYRK…FMAELFWWFE (114 aa)). A disordered region spans residues 375–415 (SSDFPSSGEGATFTQSHHHLPSRYSRPQAHSSASGGIRRSS). Residues 405-415 (SSASGGIRRSS) are compositionally biased toward low complexity. Residues S416 and S418 each carry the phosphoserine modification. T426 carries the phosphothreonine modification. Phosphoserine is present on residues S464, S598, S599, S611, and S673. 2 disordered regions span residues 611–639 (SPIT…EDSS) and 668–730 (TREA…GSEL). The span at 668–679 (TREALSPCPSTV) shows a compositional bias: polar residues. A Phosphothreonine modification is found at T678. S680 bears the Phosphoserine mark. A compositionally biased stretch (low complexity) spans 680–699 (STKSQPGSSASSSSGVKMTS). Basic and acidic residues predominate over residues 703-713 (QKFRKLNHTDG). The stretch at 756-793 (LLASEMVHLRMKLEEKRRAIEAQKKKMEAAFTKQRQKM) forms a coiled coil. The tract at residues 812–844 (LREEAAGAEDEKVYTDRAKEKESQKTDGQRSKS) is disordered. S862 carries the post-translational modification Phosphoserine. Residues 887–926 (EILEYTKSIEKLNSSLHFLQQEMQRLSLQQEMLMQMREQQ) are a coiled coil. The segment at 922-1034 (MREQQSWVIS…IQTRSFVCFG (113 aa)) is MBD region. The disordered stretch occupies residues 925–1017 (QQSWVISPPQ…SVDSLPRLRR (93 aa)). Phosphoserine is present on residues S931 and S936. A compositionally biased stretch (polar residues) spans 960–989 (SSDSPRPTHPSPQSSNRKSASFSVKSQRTP). Phosphothreonine is present on residues T997, T1002, and T1004. 2 positions are modified to phosphoserine: S1008 and S1019. Disordered regions lie at residues 1032-1078 (CFGD…PFES), 1096-1152 (PNED…DKEQ), and 1191-1349 (KETQ…EYTG). A compositionally biased stretch (basic and acidic residues) spans 1039-1075 (PQLKESKPKEEVKKEELESKGTLEQRGHNPEEKEIKP). Positions 1105–1117 (TEPPPKPVFPPTA) are enriched in pro residues. Basic and acidic residues-rich tracts occupy residues 1132 to 1152 (KPPE…DKEQ) and 1191 to 1252 (KETQ…DTVI). The residue at position 1148 (S1148) is a Phosphoserine. A coiled-coil region spans residues 1166 to 1238 (KDDQKAENDM…REFIRQEYMR (73 aa)). Residues 1287 to 1299 (SSLSLASLNTGDN) show a composition bias toward polar residues. A phosphoserine mark is found at S1313, S1319, and S1321. Over residues 1334 to 1346 (NASTTSSVASGTE) the composition is skewed to polar residues. The 135-residue stretch at 1349–1483 (GPKLYKEPSA…QTKRPVTPKK (135 aa)) folds into the CKK domain.

This sequence belongs to the CAMSAP1 family. In terms of assembly, interacts with CAMSAP3. Interacts with KATNA1 and KATNB1; leading to regulate the length of CAMSAP2-decorated microtubule stretches. Interacts with a complex formed by AKAP9 and PDE4DIP isoform 13/MMG8/SMYLE, which recruits CAMSAP2 to the Golgi. Interacts with MAPRE1/EB1.

Its subcellular location is the cytoplasm. It is found in the cytoskeleton. It localises to the golgi apparatus. The protein localises to the cilium basal body. Key microtubule-organizing protein that specifically binds the minus-end of non-centrosomal microtubules and regulates their dynamics and organization. Specifically recognizes growing microtubule minus-ends and autonomously decorates and stabilizes microtubule lattice formed by microtubule minus-end polymerization. Acts on free microtubule minus-ends that are not capped by microtubule-nucleating proteins or other factors and protects microtubule minus-ends from depolymerization. In addition, it also reduces the velocity of microtubule polymerization. Through the microtubule cytoskeleton, also regulates the organization of cellular organelles including the Golgi and the early endosomes. Essential for the tethering, but not for nucleation of non-centrosomal microtubules at the Golgi: together with Golgi-associated proteins AKAP9 and PDE4DIP, required to tether non-centrosomal minus-end microtubules to the Golgi, an important step for polarized cell movement. Also acts as a regulator of neuronal polarity and development: localizes to non-centrosomal microtubule minus-ends in neurons and stabilizes non-centrosomal microtubules, which is required for neuronal polarity, axon specification and dendritic branch formation. Through the microtubule cytoskeleton, regulates the autophagosome transport. In Homo sapiens (Human), this protein is Calmodulin-regulated spectrin-associated protein 2.